We begin with the raw amino-acid sequence, 461 residues long: Asparagine--tRNA ligase (461 aa).

This sequence belongs to the class-II aminoacyl-tRNA synthetase family. As to quaternary structure, homodimer.

The protein localises to the cytoplasm. The enzyme catalyses tRNA(Asn) + L-asparagine + ATP = L-asparaginyl-tRNA(Asn) + AMP + diphosphate + H(+). The polypeptide is Asparagine--tRNA ligase (Nitratidesulfovibrio vulgaris (strain ATCC 29579 / DSM 644 / CCUG 34227 / NCIMB 8303 / VKM B-1760 / Hildenborough) (Desulfovibrio vulgaris)).